The following is a 224-amino-acid chain: UPF0758 protein PD_0117 (224 aa).

The region spanning 102 to 224 (SIHDPISAGR…PVSFAEHGWL (123 aa)) is the MPN domain. 3 residues coordinate Zn(2+): histidine 173, histidine 175, and aspartate 186. Positions 173–186 (HNHPSGNREPSPAD) match the JAMM motif motif.

This sequence belongs to the UPF0758 family.

The sequence is that of UPF0758 protein PD_0117 from Xylella fastidiosa (strain Temecula1 / ATCC 700964).